We begin with the raw amino-acid sequence, 192 residues long: uncharacterized protein (192 aa).

Positions Gly72 to Val192 constitute a B12-binding domain.

This is an uncharacterized protein from Rhodobacter capsulatus (Rhodopseudomonas capsulata).